A 494-amino-acid polypeptide reads, in one-letter code: Rho GTPase-activating protein 19 (494 aa).

Residue alanine 2 is modified to N-acetylalanine. Phosphoserine is present on residues serine 7 and serine 31. Residues 102-308 form the Rho-GAP domain; sequence MSLKRKEKGV…FMIKHSQKLF (207 aa). Residues 399–451 form a disordered region; the sequence is QSLTQTPGREPSTPRVQKRARSRSFSGLIKRKVLGSQMTSEKKNSSPAPESVA. Phosphoserine occurs at positions 422, 438, and 470. A Phosphothreonine modification is found at threonine 478.

GTPase activator for the Rho-type GTPases by converting them to an inactive GDP-bound state. The sequence is that of Rho GTPase-activating protein 19 (Arhgap19) from Mus musculus (Mouse).